We begin with the raw amino-acid sequence, 277 residues long: Orotidine 5'-phosphate decarboxylase (277 aa).

K93 acts as the Proton donor in catalysis.

It belongs to the OMP decarboxylase family. Type 2 subfamily.

It carries out the reaction orotidine 5'-phosphate + H(+) = UMP + CO2. It functions in the pathway pyrimidine metabolism; UMP biosynthesis via de novo pathway; UMP from orotate: step 2/2. The chain is Orotidine 5'-phosphate decarboxylase from Haloarcula marismortui (strain ATCC 43049 / DSM 3752 / JCM 8966 / VKM B-1809) (Halobacterium marismortui).